The chain runs to 122 residues: Acidic phospholipase A2 BlatPLA2 (122 aa).

Cystine bridges form between C26–C115, C28–C44, C43–C95, C49–C122, C50–C88, C57–C81, and C75–C86. Y27, G29, and G31 together coordinate Ca(2+). H47 is a catalytic residue. Position 48 (D48) interacts with Ca(2+). Residue D89 is part of the active site.

Belongs to the phospholipase A2 family. Group II subfamily. D49 sub-subfamily. In terms of assembly, monomer. The cofactor is Ca(2+). In terms of tissue distribution, expressed by the venom gland.

Its subcellular location is the secreted. It carries out the reaction a 1,2-diacyl-sn-glycero-3-phosphocholine + H2O = a 1-acyl-sn-glycero-3-phosphocholine + a fatty acid + H(+). Functionally, acidic phospholipase A2 (PLA2) that only causes a mild edema, when subcutaneously injected in the mice foot. PLA2 catalyzes the calcium-dependent hydrolysis of the 2-acyl groups in 3-sn-phosphoglycerides. The polypeptide is Acidic phospholipase A2 BlatPLA2 (Bothriechis lateralis (Side-striped palm pitviper)).